The primary structure comprises 156 residues: MQDAAAGGPPGLGGGGPPEERTDCIICCSAYDLSGHLPRRLYCGHTFCQACVRRLDTPAPEQRWIPCPQCRQSTPTPRGGVAMLDLDLAAFLAVKAEREPARLEPLPLTSLKGSAITRQPAGLCPALGPQPHFPQPRYCCWGCGSLCCPPLGSPEV.

Residues cysteine 24 to arginine 71 form an RING-type zinc finger.

This Homo sapiens (Human) protein is RING finger protein 224 (RNF224).